A 283-amino-acid polypeptide reads, in one-letter code: Nucleotide-binding protein THEYE_A0235 (283 aa).

An ATP-binding site is contributed by 12 to 19 (GLSGGGKT). 62–65 (DIRV) serves as a coordination point for GTP.

The protein belongs to the RapZ-like family.

Displays ATPase and GTPase activities. This Thermodesulfovibrio yellowstonii (strain ATCC 51303 / DSM 11347 / YP87) protein is Nucleotide-binding protein THEYE_A0235.